The primary structure comprises 229 residues: Large ribosomal subunit protein uL1 (229 aa).

The protein belongs to the universal ribosomal protein uL1 family. Part of the 50S ribosomal subunit.

In terms of biological role, binds directly to 23S rRNA. The L1 stalk is quite mobile in the ribosome, and is involved in E site tRNA release. Protein L1 is also a translational repressor protein, it controls the translation of the L11 operon by binding to its mRNA. This chain is Large ribosomal subunit protein uL1, found in Listeria monocytogenes serovar 1/2a (strain ATCC BAA-679 / EGD-e).